The chain runs to 376 residues: Tetraacyldisaccharide 4'-kinase (376 aa).

51-58 (AVGGTGKT) is a binding site for ATP.

It belongs to the LpxK family.

It carries out the reaction a lipid A disaccharide + ATP = a lipid IVA + ADP + H(+). Its pathway is glycolipid biosynthesis; lipid IV(A) biosynthesis; lipid IV(A) from (3R)-3-hydroxytetradecanoyl-[acyl-carrier-protein] and UDP-N-acetyl-alpha-D-glucosamine: step 6/6. Its function is as follows. Transfers the gamma-phosphate of ATP to the 4'-position of a tetraacyldisaccharide 1-phosphate intermediate (termed DS-1-P) to form tetraacyldisaccharide 1,4'-bis-phosphate (lipid IVA). This Bacteroides fragilis (strain ATCC 25285 / DSM 2151 / CCUG 4856 / JCM 11019 / LMG 10263 / NCTC 9343 / Onslow / VPI 2553 / EN-2) protein is Tetraacyldisaccharide 4'-kinase.